A 118-amino-acid polypeptide reads, in one-letter code: Iron-sulfur cluster assembly protein CyaY (118 aa).

It belongs to the frataxin family.

Functionally, involved in iron-sulfur (Fe-S) cluster assembly. May act as a regulator of Fe-S biogenesis. In Buchnera aphidicola subsp. Baizongia pistaciae (strain Bp), this protein is Iron-sulfur cluster assembly protein CyaY.